A 357-amino-acid chain; its full sequence is Peptide chain release factor 1 (357 aa).

The residue at position 234 (Gln-234) is an N5-methylglutamine.

This sequence belongs to the prokaryotic/mitochondrial release factor family. Methylated by PrmC. Methylation increases the termination efficiency of RF1.

It localises to the cytoplasm. Peptide chain release factor 1 directs the termination of translation in response to the peptide chain termination codons UAG and UAA. The sequence is that of Peptide chain release factor 1 from Frankia casuarinae (strain DSM 45818 / CECT 9043 / HFP020203 / CcI3).